Here is a 204-residue protein sequence, read N- to C-terminus: Octanoyltransferase (204 aa).

Residues 30–204 (CETPDEIWLL…QSFINQLTDV (175 aa)) enclose the BPL/LPL catalytic domain. Residues 69 to 76 (RGGQITYH), 136 to 138 (SLG), and 149 to 151 (GIA) contribute to the substrate site. Catalysis depends on Cys-167, which acts as the Acyl-thioester intermediate.

It belongs to the LipB family.

It localises to the cytoplasm. It carries out the reaction octanoyl-[ACP] + L-lysyl-[protein] = N(6)-octanoyl-L-lysyl-[protein] + holo-[ACP] + H(+). It functions in the pathway protein modification; protein lipoylation via endogenous pathway; protein N(6)-(lipoyl)lysine from octanoyl-[acyl-carrier-protein]: step 1/2. Catalyzes the transfer of endogenously produced octanoic acid from octanoyl-acyl-carrier-protein onto the lipoyl domains of lipoate-dependent enzymes. Lipoyl-ACP can also act as a substrate although octanoyl-ACP is likely to be the physiological substrate. This is Octanoyltransferase from Nitrosomonas europaea (strain ATCC 19718 / CIP 103999 / KCTC 2705 / NBRC 14298).